The chain runs to 184 residues: Glutathione-regulated potassium-efflux system ancillary protein KefG (184 aa).

Belongs to the NAD(P)H dehydrogenase (quinone) family. KefG subfamily. Interacts with KefB.

It localises to the cell inner membrane. It catalyses the reaction a quinone + NADH + H(+) = a quinol + NAD(+). The catalysed reaction is a quinone + NADPH + H(+) = a quinol + NADP(+). Regulatory subunit of a potassium efflux system that confers protection against electrophiles. Required for full activity of KefB. This Escherichia coli O1:K1 / APEC protein is Glutathione-regulated potassium-efflux system ancillary protein KefG.